The sequence spans 89 residues: MAKKSKVAKHERQQALVEQYAELRRTLKAEGRYDELRKLPRDSSPSRLHNRCELTGRPHGYMRKFGMSRIRFRELAHQGQLPGVKKASW.

The protein belongs to the universal ribosomal protein uS14 family. Part of the 30S ribosomal subunit. Contacts proteins S3 and S10.

Its function is as follows. Binds 16S rRNA, required for the assembly of 30S particles and may also be responsible for determining the conformation of the 16S rRNA at the A site. The protein is Small ribosomal subunit protein uS14A of Listeria monocytogenes serovar 1/2a (strain ATCC BAA-679 / EGD-e).